A 190-amino-acid chain; its full sequence is Potassium-transporting ATPase KdpC subunit (190 aa).

A helical transmembrane segment spans residues 13-33 (VGFLLLTLVCGVVYPGIVTII).

This sequence belongs to the KdpC family. In terms of assembly, the system is composed of three essential subunits: KdpA, KdpB and KdpC.

The protein localises to the cell membrane. Functionally, part of the high-affinity ATP-driven potassium transport (or Kdp) system, which catalyzes the hydrolysis of ATP coupled with the electrogenic transport of potassium into the cytoplasm. This subunit acts as a catalytic chaperone that increases the ATP-binding affinity of the ATP-hydrolyzing subunit KdpB by the formation of a transient KdpB/KdpC/ATP ternary complex. The polypeptide is Potassium-transporting ATPase KdpC subunit (Listeria welshimeri serovar 6b (strain ATCC 35897 / DSM 20650 / CCUG 15529 / CIP 8149 / NCTC 11857 / SLCC 5334 / V8)).